A 197-amino-acid chain; its full sequence is uncharacterized protein (197 aa).

Belongs to the methyltransferase superfamily.

This is an uncharacterized protein from Mycobacterium bovis (strain ATCC BAA-935 / AF2122/97).